The following is a 179-amino-acid chain: MTIMNGFELHYLSFVYAQEFSSKNNNLGGQMKHIIALASKIAFTLALLYVILDRVYHASFLSVMFIALFLGFVSYLSGDMLVLPRTNNITASLADFGLSFVILWVFVLTQTRNDFSPFGAALLSAACLTVFEYFFHRYLLKNVLDENFRNELSARDNTLQYQTEAADELFPETKEKHKE.

Helical transmembrane passes span 33–53 (HIIA…VILD), 63–83 (VMFI…MLVL), 89–109 (ITAS…FVLT), and 115–135 (FSPF…EYFF).

The protein resides in the cell membrane. This is an uncharacterized protein from Bacillus subtilis (strain 168).